Consider the following 66-residue polypeptide: U1-theraphotoxin-Cg1d 2 (66 aa).

Positions 1–21 are cleaved as a signal peptide; that stretch reads MKMSALFPIFGLPLLFCNSFA. A propeptide spanning residues 22–29 is cleaved from the precursor; the sequence is AELKATGR. Intrachain disulfides connect cysteine 31/cysteine 46, cysteine 38/cysteine 51, and cysteine 45/cysteine 58. The residue at position 63 (proline 63) is a Proline amide.

It belongs to the neurotoxin 10 (Hwtx-1) family. 46 (Jztx-7/10/12) subfamily. Expressed by the venom gland.

It localises to the secreted. In terms of biological role, probable ion channel inhibitor. This chain is U1-theraphotoxin-Cg1d 2, found in Chilobrachys guangxiensis (Chinese earth tiger tarantula).